The chain runs to 110 residues: Phosphoribosyl-ATP pyrophosphatase (110 aa).

This sequence belongs to the PRA-PH family.

Its subcellular location is the cytoplasm. The enzyme catalyses 1-(5-phospho-beta-D-ribosyl)-ATP + H2O = 1-(5-phospho-beta-D-ribosyl)-5'-AMP + diphosphate + H(+). It functions in the pathway amino-acid biosynthesis; L-histidine biosynthesis; L-histidine from 5-phospho-alpha-D-ribose 1-diphosphate: step 2/9. In Clostridium acetobutylicum (strain ATCC 824 / DSM 792 / JCM 1419 / IAM 19013 / LMG 5710 / NBRC 13948 / NRRL B-527 / VKM B-1787 / 2291 / W), this protein is Phosphoribosyl-ATP pyrophosphatase (hisE).